Here is a 179-residue protein sequence, read N- to C-terminus: Large ribosomal subunit protein uL5 (179 aa).

Belongs to the universal ribosomal protein uL5 family. Part of the 50S ribosomal subunit; part of the 5S rRNA/L5/L18/L25 subcomplex. Contacts the 5S rRNA and the P site tRNA. Forms a bridge to the 30S subunit in the 70S ribosome.

Functionally, this is one of the proteins that bind and probably mediate the attachment of the 5S RNA into the large ribosomal subunit, where it forms part of the central protuberance. In the 70S ribosome it contacts protein S13 of the 30S subunit (bridge B1b), connecting the 2 subunits; this bridge is implicated in subunit movement. Contacts the P site tRNA; the 5S rRNA and some of its associated proteins might help stabilize positioning of ribosome-bound tRNAs. The polypeptide is Large ribosomal subunit protein uL5 (Paraburkholderia phymatum (strain DSM 17167 / CIP 108236 / LMG 21445 / STM815) (Burkholderia phymatum)).